Consider the following 211-residue polypeptide: Small ribosomal subunit protein uS3 (211 aa).

The KH type-2 domain maps to 38 to 106; the sequence is LRNFLKKRLF…EIYLNIQEVR (69 aa).

This sequence belongs to the universal ribosomal protein uS3 family. As to quaternary structure, part of the 30S ribosomal subunit. Forms a tight complex with proteins S10 and S14.

Functionally, binds the lower part of the 30S subunit head. Binds mRNA in the 70S ribosome, positioning it for translation. In Geobacter metallireducens (strain ATCC 53774 / DSM 7210 / GS-15), this protein is Small ribosomal subunit protein uS3.